The primary structure comprises 219 residues: GTP-binding protein Rit1 (219 aa).

GTP contacts are provided by residues 28–35 (GAGGVGKS), 75–79 (DTAGQ), and 134–137 (NKSD).

The protein belongs to the small GTPase superfamily. Ras family. In terms of assembly, interacts with AFDN, the C-terminal domain of RALGDS and RLF, but not with RIN1 and PIK3CA. RLF binds exclusively to the active GTP-bound form. Strongly interacts with BRAF, but only weakly with RAF1. BARF and RAF1 association is dependent upon the GTP-bound state. Interacts with RGL3. In terms of tissue distribution, expressed in many tissues.

It localises to the cell membrane. The catalysed reaction is GTP + H2O = GDP + phosphate + H(+). With respect to regulation, alternates between an inactive form bound to GDP and an active form bound to GTP. In terms of biological role, plays a crucial role in coupling NGF stimulation to the activation of both EPHB2 and MAPK14 signaling pathways and in NGF-dependent neuronal differentiation. Involved in ELK1 transactivation through the Ras-MAPK signaling cascade that mediates a wide variety of cellular functions, including cell proliferation, survival, and differentiation. This is GTP-binding protein Rit1 (Rit1) from Mus musculus (Mouse).